We begin with the raw amino-acid sequence, 175 residues long: B9 domain-containing protein 2 (175 aa).

Residues 2 to 118 (AEVHVIGQII…DCPTWRPLGS (117 aa)) form the C2 B9-type domain.

The protein belongs to the B9D family. As to quaternary structure, part of the tectonic-like complex (also named B9 complex). Interacts with TUBG1.

It localises to the cytoplasm. The protein localises to the cytoskeleton. Its subcellular location is the cilium basal body. The protein resides in the cilium axoneme. It is found in the nucleus. Its function is as follows. Component of the tectonic-like complex, a complex localized at the transition zone of primary cilia and acting as a barrier that prevents diffusion of transmembrane proteins between the cilia and plasma membranes. In Rattus norvegicus (Rat), this protein is B9 domain-containing protein 2 (B9d2).